A 59-amino-acid polypeptide reads, in one-letter code: Thrombostatin (59 aa).

4 cysteine pairs are disulfide-bonded: C3–C22, C17–C37, C39–C51, and C52–C57. The Cell attachment site signature appears at 43–45; it reads RGD.

The protein belongs to the three-finger toxin family. Short-chain subfamily. Antiplatelet toxin sub-subfamily. In terms of tissue distribution, expressed by the venom gland.

The protein resides in the secreted. Inhibits ADP-induced platelet aggregation and inhibits the binding of purified platelet fibrinogen receptor alpha-IIb/beta-3 (ITGA2B/ITGB3) to immobilized fibrinogen. This Dendroaspis angusticeps (Eastern green mamba) protein is Thrombostatin.